The chain runs to 319 residues: ATP-dependent 6-phosphofructokinase (319 aa).

Residue G11 coordinates ATP. 21–25 (RAVVR) contributes to the ADP binding site. Residues 72-73 (RC) and 102-105 (GDGS) contribute to the ATP site. D103 provides a ligand contact to Mg(2+). 125-127 (TID) is a substrate binding site. D127 serves as the catalytic Proton acceptor. ADP is bound at residue R154. 169-171 (MGR) provides a ligand contact to substrate. Residues 185–187 (GAE), R211, and 213–215 (KKH) contribute to the ADP site. Residues E222, R243, and 249–252 (HIQR) each bind substrate.

Belongs to the phosphofructokinase type A (PFKA) family. ATP-dependent PFK group I subfamily. Prokaryotic clade 'B1' sub-subfamily. Homotetramer. Requires Mg(2+) as cofactor.

It is found in the cytoplasm. The enzyme catalyses beta-D-fructose 6-phosphate + ATP = beta-D-fructose 1,6-bisphosphate + ADP + H(+). It functions in the pathway carbohydrate degradation; glycolysis; D-glyceraldehyde 3-phosphate and glycerone phosphate from D-glucose: step 3/4. With respect to regulation, allosterically activated by ADP and other diphosphonucleosides, and allosterically inhibited by phosphoenolpyruvate. In terms of biological role, catalyzes the phosphorylation of D-fructose 6-phosphate to fructose 1,6-bisphosphate by ATP, the first committing step of glycolysis. The chain is ATP-dependent 6-phosphofructokinase from Lysinibacillus sphaericus (Bacillus sphaericus).